The sequence spans 503 residues: MEEFQGYLELDRSRQHYLLYPLLFREYIYALAHDHGLNRSILFESAGYDNKSSSIIVKRLITRMYQQNPLIFSAKDSIQNQFFGHNKNLYSQILSEGFAVIVEIPFSLRFLFLLERKEIAKSYHLRSIHSIFSFLEDKFTHLDYVSDVLIPYHIHLEILVQTLRYWVKDASSLHLLRLFLHDYWNSFITPKKHITFFFKGNPRLFLFLYNSHICEYEYIFLFLRNQSSHLRSTSSGIFFERIHFYVKIEHFVKVFFDNNFQCILWFLKDPFMHYVRYQGKFFMASKDTPLLMNKWKCYLVNLWQYHFSVWFQPGRIDINRLCKYSLDFLGYRSSVRLNSSVVRSQMLENLFLINNAMKKFETIVPIIPLIGSLYKSNFCNTFGHPISKPTRTHSSDSDIIDRFLRICRNLSHYHSGSSKKKSLYRVKYILRLSCVKTLARKHKRTVRTFVKRLGSEFLEEFLTEEEVFLSLIFPRTYSTSRRLYRGQIWYLDITSINDLVNYE.

This sequence belongs to the intron maturase 2 family. MatK subfamily.

It localises to the plastid. It is found in the chloroplast. Functionally, usually encoded in the trnK tRNA gene intron. Probably assists in splicing its own and other chloroplast group II introns. The chain is Maturase K from Kunzea pulchella (Red kunzea).